The chain runs to 528 residues: Capsule biosynthesis protein CapD proenzyme (528 aa).

The N-terminal stretch at 1–26 (MNSFKWGKKIILFCLIVSLMGGIGVS) is a signal peptide. The active-site Nucleophile is the Thr-352. Poly-gamma-D-glutamate contacts are provided by residues Thr-352, 429 to 432 (GGNR), and Arg-520.

The protein belongs to the gamma-glutamyltransferase family. As to quaternary structure, this enzyme consists of two polypeptide chains, which are synthesized in precursor form from a single polypeptide. In terms of processing, cleaved by autocatalysis into a large and a small subunit.

The protein operates within capsule biogenesis; capsule polysaccharide biosynthesis. In terms of biological role, transpeptidase that cleaves the poly-gamma-D-glutamate capsule and catalyzes the formation of an amide bond with the side-chain amino group of meso-diaminopimelic acid (m-DAP) in the peptidoglycan scaffold. Degradation of the high-molecular weight capsule (H-capsule) to the lower-molecular weight capsule (L-capsule), which is released from the bacterial cell surface. The production of L-capsule is essential to mediate escape from host defenses. The sequence is that of Capsule biosynthesis protein CapD proenzyme (capD) from Bacillus anthracis.